The primary structure comprises 90 residues: Putative defensin-like protein 243 (90 aa).

The signal sequence occupies residues M1 to A19. Cystine bridges form between C33/C88, C43/C72, C53/C82, and C70/C84.

Belongs to the DEFL family.

It localises to the secreted. The polypeptide is Putative defensin-like protein 243 (SCRL9) (Arabidopsis thaliana (Mouse-ear cress)).